The sequence spans 925 residues: Coronin-7 (925 aa).

4 WD repeats span residues 75 to 115 (CHSD…QALP), 124 to 163 (PEDLPVEVLQFHPTSDGILVSAAGTTVKVWDAAKQQPLTE), 166 to 205 (AHGDLVQSAVWSRDGALVGTACKDKQLRIFDPRTKPRASQ), and 209 to 253 (AHEN…SALA). Residues 419 to 461 (VGDADASEGFSSPPSSLTSPSTPSSLGPSLSSTSGIGTSPSLR) form a disordered region. The segment covering 429–460 (SSPPSSLTSPSTPSSLGPSLSSTSGIGTSPSL) has biased composition (low complexity). Phosphoserine is present on residues serine 462 and serine 465. Residue lysine 472 forms a Glycyl lysine isopeptide (Lys-Gly) (interchain with G-Cter in ubiquitin) linkage. WD repeat units follow at residues 542 to 582 (QNGA…LEEV), 592 to 632 (GHTE…DRLK), and 635 to 674 (GHQDQIFSLAWSPDGQQLATVCKDGRVRVYRPRSGPEPLQ). Lysine 680 is covalently cross-linked (Glycyl lysine isopeptide (Lys-Gly) (interchain with G-Cter in ubiquitin)). A WD 8 repeat occupies 728-768 (DVAPSTLLPSYDPDTGLVLLTGKGDTRVFLYELLPESPFFL). Residues 858-925 (QPPDMSPVSQ…FEGVDEDEWD (68 aa)) form a disordered region. Residues 866–882 (SQAPREAPARRAPSSAQ) are compositionally biased toward low complexity. Basic and acidic residues predominate over residues 884 to 896 (LEEKSDQQKKEEL). Serine 915 carries the post-translational modification Phosphoserine.

This sequence belongs to the WD repeat coronin family. Interacts with clathrin adapter AP1 complex. This interaction takes place at Golgi membranes and not AP1-positive endosomal membranes. Interacts (when ubiquitinated at Lys-472) with EPS15. The membrane-associated form is phosphorylated on tyrosine residues. Post-translationally, ubiquitinated via 'Lys-33'-linked ubiquitin chains by the BCR(KLHL20) E3 ubiquitin ligase complex: 'Lys-33'-linked ubiquitination promotes interaction with EPS15 and facilitates actin polymerization at the trans-Golgi network, thereby facilitating post-Golgi trafficking. Deubiquitinated by ZRANB1/TRABID. In terms of tissue distribution, widely expressed. Expressed in the spleen, peripheral leukocytes, testes, brain, thymus and small intestine.

It localises to the golgi apparatus membrane. The protein resides in the golgi apparatus. Its subcellular location is the trans-Golgi network. It is found in the cytoplasmic vesicle. The protein localises to the cytoplasm. It localises to the cytosol. In terms of biological role, F-actin regulator involved in anterograde Golgi to endosome transport: upon ubiquitination via 'Lys-33'-linked ubiquitin chains by the BCR(KLHL20) E3 ubiquitin ligase complex, interacts with EPS15 and localizes to the trans-Golgi network, where it promotes actin polymerization, thereby facilitating post-Golgi trafficking. May play a role in the maintenance of the Golgi apparatus morphology. In Homo sapiens (Human), this protein is Coronin-7 (CORO7).